The chain runs to 273 residues: Large ribosomal subunit protein uL2 (273 aa).

Positions 228-273 are disordered; it reads VDHPHGGGEGKTSGGRHPVTPWGFPTKGKKTRKNKRTSKFIVKKRK. The span at 254–273 shows a compositional bias: basic residues; sequence KGKKTRKNKRTSKFIVKKRK.

The protein belongs to the universal ribosomal protein uL2 family. As to quaternary structure, part of the 50S ribosomal subunit. Forms a bridge to the 30S subunit in the 70S ribosome.

One of the primary rRNA binding proteins. Required for association of the 30S and 50S subunits to form the 70S ribosome, for tRNA binding and peptide bond formation. It has been suggested to have peptidyltransferase activity; this is somewhat controversial. Makes several contacts with the 16S rRNA in the 70S ribosome. This Rickettsia felis (strain ATCC VR-1525 / URRWXCal2) (Rickettsia azadi) protein is Large ribosomal subunit protein uL2.